The primary structure comprises 800 residues: MSLVYLLGGLIVIMLIVLMTLFIKSLRRFAGYIALLAPILASGYFLAQIPNVLHGKFVEFKIPWMPAIDVNLDFRLDGLGLMFGLIISIIGVAVFFYATQYLSVNRDNLPRFFLYLLLFMFSMLGIVVSNNTILMYVFWELTSVSSFLLISYWYSNAESQLGAIQSFIITVLGGLALLTGFIMLYIITGTNTISELLTQSHSISEHALFIPMMIMLLIGAFTKSAQFPFHIWLPKAMAAPTPVSAYLHSATMVKAGIFLLFKFTPILGLSDSYIYIVTFVGLITMIFGSVTALRQYDLKGILAYSTISQLGMIMSMVGLGGGIAQHSSGPMAETYTLILFAGLFHLMNHAIFKCALFMGVGIIDHEAGTRDIRRLSGMRKFFPKMNLVMTLAALSMAGVPLLNGFLSKEMFFDSLVSAIELQQFGLTLTIIVVAIGVIASIFTFVYAVYMLKETYWGEFDEKKVPKKHIHEPWLFSLPAIILMVMIPIIFFIPNFFTEHLVLPALRNVTNLGSSVDAIAPHVSQWHGVNLPLIFSVIVIIVGLILALKVNWKAITHQVIKYASITNSYRNVYRGFERYSGQMIRGLMNNRLNHYNIITVLIFSILIAYGIFQVGLPKLHQIEVSEFGPLEVILGIMISVVGIALVFIRQRLTMVILNGIIGYSVALFFLLMRAPDLALTQLVVETITTILFIVSFSRLPNIARTTANMKKETIKIIVSFIMAGAVVTLIFIAQQGDGLESISKYYTNAYELTGGKNIVNAILGDFRALDTMFEGIVLIIAGLGIYTLLHYKDRRGQDERK.

A run of 21 helical transmembrane segments spans residues leucine 3–isoleucine 23, phenylalanine 29–isoleucine 49, glycine 78–alanine 98, leucine 109–serine 129, isoleucine 133–tryptophan 153, phenylalanine 167–isoleucine 187, serine 202–threonine 222, serine 249–leucine 269, tyrosine 273–leucine 293, glycine 300–glycine 320, leucine 337–phenylalanine 357, leucine 387–serine 407, leucine 428–valine 448, proline 472–isoleucine 492, glycine 527–leucine 547, isoleucine 596–proline 616, glycine 627–isoleucine 647, leucine 651–methionine 671, leucine 676–serine 696, threonine 712–alanine 732, and leucine 768–leucine 788.

The protein belongs to the CPA3 antiporters (TC 2.A.63) subunit A family. As to quaternary structure, may form a heterooligomeric complex that consists of seven subunits: mnhA2, mnhB2, mnhC2, mnhD2, mnhE2, mnhF2 and mnhG2.

It localises to the cell membrane. The polypeptide is Putative antiporter subunit mnhA2 (mnhA2) (Staphylococcus haemolyticus (strain JCSC1435)).